The chain runs to 317 residues: Osteopontin (317 aa).

An N-terminal signal peptide occupies residues 1 to 16; sequence MRLAVVCFCLFGLASC. Phosphoserine occurs at positions 26, 27, 60, 62, and 63. The disordered stretch occupies residues 43–297; sequence WLKPDPSQKQ…LVLDPKSKED (255 aa). Polar residues predominate over residues 49 to 63; that stretch reads SQKQNLLAPQNSVSS. Phosphothreonine is present on T66. S76, S78, S81, S106, S109, S112, S115, and S118 each carry phosphoserine. Residues 86 to 110 are compositionally biased toward acidic residues; it reads DDDDDDDDDGDHAESEDSVNSDESD. Residues T123, T132, and T137 are each glycosylated (O-linked (GalNAc...) threonine). The Cell attachment site signature appears at 144 to 146; it reads RGD. 2 positions are modified to phosphothreonine: T170 and T175. Basic and acidic residues predominate over residues 174–187; it reads LTSRMKSQESDEAI. 7 positions are modified to phosphoserine: S176, S180, S200, S204, S209, S213, and S219. Polar residues predominate over residues 197-216; it reads SVPSDQDSNGKTSHESSQLD. The O-linked (Xyl...) (chondroitin sulfate) serine glycan is linked to S219. A Phosphothreonine modification is found at T222. Basic and acidic residues-rich tracts occupy residues 223–240 and 248–263; these read HSLEQSKEYKQRASHEST and SAEKPDAIDSAERSDA. 14 positions are modified to phosphoserine: S224, S228, S257, S261, S266, S270, S273, S278, S283, S294, S306, S311, S313, and S314. Basic and acidic residues predominate over residues 273-297; sequence SLEHQSHEFHSHEDKLVLDPKSKED. A glycan (O-linked (Xyl...) (chondroitin sulfate) serine) is linked at S311.

Belongs to the osteopontin family. In terms of assembly, interacts (via N-terminus) with integrin ITGA9:ITGB1. In terms of processing, extensively phosphorylated by FAM20C in the extracellular medium at multiple sites within the S-x-E/pS motif. The phosphorylated form inhibits hydroxyapatite crystallization. Dephosphorylation via a mechanism involving ALPL/TNAP promotes hydroxyapatite crystallization. O-glycosylated. Post-translationally, forms covalent cross-links mediated by transglutaminase TGM2, between a glutamine and the epsilon-amino group of a lysine residue, forming homopolymers and heteropolymers, increasing its collagen binding properties.

The protein resides in the secreted. Its function is as follows. Major non-collagenous bone protein that binds tightly to hydroxyapatite. Appears to form an integral part of the mineralized matrix. Probably important to cell-matrix interaction. Functionally, acts as a cytokine involved in enhancing production of interferon-gamma and interleukin-12 and reducing production of interleukin-10 and is essential in the pathway that leads to type I immunity. The polypeptide is Osteopontin (Spp1) (Rattus norvegicus (Rat)).